We begin with the raw amino-acid sequence, 125 residues long: Protein ApaG (125 aa).

One can recognise an ApaG domain in the interval 1-125; that stretch reads MINSPRVCIQ…FRLAVPTLIH (125 aa).

The polypeptide is Protein ApaG (Escherichia coli (strain SE11)).